Consider the following 148-residue polypeptide: Nucleoside diphosphate kinase (148 aa).

ATP is bound by residues lysine 9, phenylalanine 57, arginine 85, threonine 91, arginine 102, and asparagine 112. Histidine 115 acts as the Pros-phosphohistidine intermediate in catalysis.

Belongs to the NDK family. In terms of assembly, homotetramer. Mg(2+) serves as cofactor.

It localises to the cytoplasm. The catalysed reaction is a 2'-deoxyribonucleoside 5'-diphosphate + ATP = a 2'-deoxyribonucleoside 5'-triphosphate + ADP. It catalyses the reaction a ribonucleoside 5'-diphosphate + ATP = a ribonucleoside 5'-triphosphate + ADP. Major role in the synthesis of nucleoside triphosphates other than ATP. The ATP gamma phosphate is transferred to the NDP beta phosphate via a ping-pong mechanism, using a phosphorylated active-site intermediate. This is Nucleoside diphosphate kinase from Macrococcus caseolyticus (strain JCSC5402) (Macrococcoides caseolyticum).